The sequence spans 132 residues: mRNA interferase toxin YafO (132 aa).

Probably forms a complex with the antitoxin YafN which inhibits the mRNA interferase activity.

Toxic component of a type II toxin-antitoxin (TA) system. A translation-dependent mRNA interferase. Overexpression causes cessation of cell growth and inhibits cell proliferation via inhibition of translation; this blockage is overcome by subsequent expression of antitoxin YafN. Overexpression causes cleavage of a number of mRNAs in a ribosome-dependent fashion. YafO binding to the 50S ribosomal subunit in the translation complex induces mRNA cleavage 3' to the region protected by the ribosome; YafO alone is not able to digest mRNA. The chain is mRNA interferase toxin YafO (yafO) from Escherichia coli (strain K12).